The sequence spans 375 residues: MHCALYTAGTCRSCQWLEKPYPQQLTDKQHHLQSLLSDRDVAQWLEPIAGEQSAFRNKAKMVVSGSVERPLLGMLHRDGTAVDLSACPLYPASFSPMFDVLKSFIARAGLTPYNVARKRGELKYLLLTESTHSGGVMLRFVLRSDNKLAQLRAALPWLQQQLPQLRVISANIQPVHMAIMEGEREIPLTEQQALEEQFNQVPLYIRPQSFFQTNPQVAAELYATARDWVRALAIDSMWDLFCGVGGFGLHCALPETRLTGIEISAEAIACARQSAKTLGLQHVDFQALDSTRFATAEGSVPQLVLVNPPRRGIGKALCDYLNQMAPGYILYSSCNAESMAKDIEMLPDYRIERVQLFDMFPHTAHYEVLTLLVRN.

Residues C3, C11, C14, and C87 each coordinate [4Fe-4S] cluster. Residues Q212, F241, E262, and N307 each contribute to the S-adenosyl-L-methionine site. The active-site Nucleophile is the C334.

This sequence belongs to the class I-like SAM-binding methyltransferase superfamily. RNA M5U methyltransferase family. RlmC subfamily.

It carries out the reaction uridine(747) in 23S rRNA + S-adenosyl-L-methionine = 5-methyluridine(747) in 23S rRNA + S-adenosyl-L-homocysteine + H(+). Functionally, catalyzes the formation of 5-methyl-uridine at position 747 (m5U747) in 23S rRNA. This Serratia proteamaculans (strain 568) protein is 23S rRNA (uracil(747)-C(5))-methyltransferase RlmC.